Consider the following 569-residue polypeptide: MSEEKLGQHYLAALNEAFPGVVLDHAWQTKDQLTVTVKVNYLPEVVEFLYYKQGGWLSVLFGNDERKLNGHYAVYYVLSMEKGTKCWITVRVEVDANKPEYPSVTPRVPAAVWGEREVRDMYGLIPVGLPDERRLVLPDDWPDELYPLRKDSMDYRQRPAPTTDAETYEFINELGDKKNNVVPIGPLHVTSDEPGHFRLFVDGENIIDADYRLFYVHRGMEKLAETRMGYNEVTFLSDRVCGICGFAHSTAYTTSVENAMGIQVPERAQMIRAILLEVERLHSHLLNLGLACHFTGFDSGFMQFFRVRETSMKMAEILTGARKTYGLNLIGGIRRDLLKDDMIQTRQLAQQMRREVQELVDVLLSTPNMEQRTVGIGRLDPEIARDFSNVGPMVRASGHARDTRADHPFVGYGLLPMEVHSEQGCDVISRLKVRINEVYTALNMIDYGLDNLPGGPLMVEGFTYIPHRFALGFAEAPRGDDIHWSMTGDNQKLYRWRCRAATYANWPTLRYMLRGNTVSDAPLIIGSLDPCYSCTDRMTVVDVRKKKSKVVPYKELERYSIERKNSPLK.

The propeptide occupies Met-538–Lys-569.

Belongs to the complex I 49 kDa subunit family. FHL comprises of a formate dehydrogenase, unidentified electron carriers and a hydrogenase (isoenzyme 3). In this non-energy conserving pathway molecular hydrogen and carbodioxide from formate are released. The cofactor is [4Fe-4S] cluster. It depends on Ni(2+) as a cofactor.

The polypeptide is Formate hydrogenlyase subunit 5 (hycE) (Escherichia coli (strain K12)).